Consider the following 99-residue polypeptide: RNA-binding protein Hfq (99 aa).

The 60-residue stretch at 9 to 68 (DPFLNALRRERVPVSIYLVNGIKLQGQIESFDQFVILLKNTVSQMVYKHAISTVVPSRPV) folds into the Sm domain. A disordered region spans residues 64 to 99 (PSRPVSHHSNNPGGSNNYHGSNTTAQQQSQDADDAE). Residues 70–93 (HHSNNPGGSNNYHGSNTTAQQQSQ) show a composition bias toward low complexity.

Belongs to the Hfq family. In terms of assembly, homohexamer.

RNA chaperone that binds small regulatory RNA (sRNAs) and mRNAs to facilitate mRNA translational regulation in response to envelope stress, environmental stress and changes in metabolite concentrations. Also binds with high specificity to tRNAs. The sequence is that of RNA-binding protein Hfq from Pectobacterium atrosepticum (strain SCRI 1043 / ATCC BAA-672) (Erwinia carotovora subsp. atroseptica).